We begin with the raw amino-acid sequence, 203 residues long: GTP-binding protein yptV1 (203 aa).

GTP-binding positions include G15–C23, Y33–T40, D63–Q67, N121–D124, and S151–K153. Positions Y37–F45 match the Effector region motif. Residues M173 to C203 are disordered. Residues C202 and C203 are each lipidated (S-geranylgeranyl cysteine).

This sequence belongs to the small GTPase superfamily. Rab family.

Its subcellular location is the cell membrane. Its function is as follows. Protein transport. Probably involved in vesicular traffic. The polypeptide is GTP-binding protein yptV1 (YPTV1) (Volvox carteri (Green alga)).